The following is a 1577-amino-acid chain: Disco-interacting protein 2 homolog B-A (1577 aa).

In terms of domain architecture, DMAP1-binding spans 7 to 124 (DLAALPKEVR…PMPTKRRSAF (118 aa)). 4 disordered regions span residues 109–148 (EEKMALPMPTKRRSAFVQSPAENCTPPDTSSASEDEGSLR), 173–204 (VQGSSTSSSASSTLSHGDGKTHNHNNHSQGQT), 217–239 (DTNSSSGSVPPDVTSTAPQDRNS), and 253–273 (SRGQSRSSMMDTAGGVPAHSR). The segment covering 124 to 140 (FVQSPAENCTPPDTSSA) has biased composition (polar residues). The span at 176 to 187 (SSTSSSASSTLS) shows a compositional bias: low complexity. The segment covering 217–236 (DTNSSSGSVPPDVTSTAPQD) has biased composition (polar residues).

This sequence belongs to the DIP2 family.

Its subcellular location is the cell projection. The protein resides in the dendrite. It is found in the axon. The protein localises to the perikaryon. Negatively regulates axonal outgrowth and is essential for normal synaptic transmission. Not required for regulation of axon polarity. Promotes acetylation of alpha-tubulin. This is Disco-interacting protein 2 homolog B-A (dip2ba) from Danio rerio (Zebrafish).